The primary structure comprises 779 residues: Phosphoribosylformylglycinamidine synthase subunit PurL (779 aa).

H52 is a catalytic residue. ATP-binding residues include Y55 and K94. E96 is a Mg(2+) binding site. Substrate-binding positions include 97–100 and R119; that span reads SHNH. Residue H98 is the Proton acceptor of the active site. D120 contacts Mg(2+). Q243 lines the substrate pocket. D271 contacts Mg(2+). Residue 315 to 317 participates in substrate binding; that stretch reads ESQ. N523 and G560 together coordinate ATP. N561 lines the Mg(2+) pocket. S563 contacts substrate.

This sequence belongs to the FGAMS family. In terms of assembly, monomer. Part of the FGAM synthase complex composed of 1 PurL, 1 PurQ and 2 PurS subunits.

It is found in the cytoplasm. It carries out the reaction N(2)-formyl-N(1)-(5-phospho-beta-D-ribosyl)glycinamide + L-glutamine + ATP + H2O = 2-formamido-N(1)-(5-O-phospho-beta-D-ribosyl)acetamidine + L-glutamate + ADP + phosphate + H(+). It participates in purine metabolism; IMP biosynthesis via de novo pathway; 5-amino-1-(5-phospho-D-ribosyl)imidazole from N(2)-formyl-N(1)-(5-phospho-D-ribosyl)glycinamide: step 1/2. Its function is as follows. Part of the phosphoribosylformylglycinamidine synthase complex involved in the purines biosynthetic pathway. Catalyzes the ATP-dependent conversion of formylglycinamide ribonucleotide (FGAR) and glutamine to yield formylglycinamidine ribonucleotide (FGAM) and glutamate. The FGAM synthase complex is composed of three subunits. PurQ produces an ammonia molecule by converting glutamine to glutamate. PurL transfers the ammonia molecule to FGAR to form FGAM in an ATP-dependent manner. PurS interacts with PurQ and PurL and is thought to assist in the transfer of the ammonia molecule from PurQ to PurL. The polypeptide is Phosphoribosylformylglycinamidine synthase subunit PurL (Prochlorococcus marinus (strain MIT 9312)).